The following is a 788-amino-acid chain: Protein translocase subunit SecA 2 (788 aa).

ATP contacts are provided by residues Q77, 95 to 99 (GEGKT), and D491.

Belongs to the SecA family. Monomer and homodimer. Part of the essential Sec protein translocation apparatus which comprises SecA, SecYEG and auxiliary proteins SecDF. Other proteins may also be involved.

Its subcellular location is the cell membrane. It localises to the cytoplasm. The catalysed reaction is ATP + H2O + cellular proteinSide 1 = ADP + phosphate + cellular proteinSide 2.. Functionally, part of the Sec protein translocase complex. Interacts with the SecYEG preprotein conducting channel. Has a central role in coupling the hydrolysis of ATP to the transfer of proteins into and across the cell membrane, serving as an ATP-driven molecular motor driving the stepwise translocation of polypeptide chains across the membrane. This Lactobacillus johnsonii (strain CNCM I-12250 / La1 / NCC 533) protein is Protein translocase subunit SecA 2.